Here is a 181-residue protein sequence, read N- to C-terminus: Lipoprotein signal peptidase (181 aa).

3 consecutive transmembrane segments (helical) span residues 25–45 (LFYK…QVFI), 86–106 (LVYF…VFMV), and 107–127 (KYSY…NFFD). Residues D138 and D153 contribute to the active site. Residues 149-169 (FNFADCCITFGFIGLFFCFLI) form a helical membrane-spanning segment.

It belongs to the peptidase A8 family.

The protein resides in the cell membrane. The enzyme catalyses Release of signal peptides from bacterial membrane prolipoproteins. Hydrolyzes -Xaa-Yaa-Zaa-|-(S,diacylglyceryl)Cys-, in which Xaa is hydrophobic (preferably Leu), and Yaa (Ala or Ser) and Zaa (Gly or Ala) have small, neutral side chains.. The protein operates within protein modification; lipoprotein biosynthesis (signal peptide cleavage). In terms of biological role, this protein specifically catalyzes the removal of signal peptides from prolipoproteins. This chain is Lipoprotein signal peptidase, found in Mycoplasma genitalium (strain ATCC 33530 / DSM 19775 / NCTC 10195 / G37) (Mycoplasmoides genitalium).